Here is a 633-residue protein sequence, read N- to C-terminus: GRAM domain-containing protein 4 (633 aa).

3 disordered regions span residues 1–46 (MGIA…VRPR), 72–109 (LAES…AGPG), and 182–216 (VLKA…RSQG). Residues 27-39 (PWDKGLSGREPPR) show a composition bias toward basic and acidic residues. Phosphoserine is present on residues Ser75 and Ser79. Residues 95-104 (SPRDSEELRD) show a composition bias toward basic and acidic residues. Residues 134 to 190 (HLEIALLEKHFLQEELRKLREETNSEMLRQELDRERQRRIELEQKMQEVLKARSEEQ) are a coiled coil. Residues 190–205 (QPAQPQQPPKGQSQAS) show a composition bias toward low complexity. 3 helical membrane passes run 295–315 (VYMN…LAIL), 389–409 (TTQK…FFPY), and 411–431 (LVGL…DFIF). A GRAM domain is found at 500–578 (GNFHEIFNLT…MDITDIQKYK (79 aa)).

As to quaternary structure, interacts with RTN4 (isoform B).

The protein resides in the mitochondrion membrane. It is found in the endoplasmic reticulum membrane. Its function is as follows. Plays a role as a mediator of E2F1-induced apoptosis in the absence of p53/TP53. Inhibits TLR9 response to nucelic acids and regulates TLR9-mediated innate immune response. The chain is GRAM domain-containing protein 4 from Mus musculus (Mouse).